Here is a 581-residue protein sequence, read N- to C-terminus: Pyridine nucleotide-disulfide oxidoreductase domain-containing protein 2 (581 aa).

38-71 is an FAD binding site; that stretch reads VVIGAGHNGLVAAAYLQRLGVNTAVFERRHVIGG.

Belongs to the carotenoid/retinoid oxidoreductase family. As to quaternary structure, interacts with COX5B; this interaction may contribute to localize PYROXD2 to the inner face of the inner mitochondrial membrane.

Its subcellular location is the mitochondrion matrix. Its function is as follows. Probable oxidoreductase that may play a role as regulator of mitochondrial function. The chain is Pyridine nucleotide-disulfide oxidoreductase domain-containing protein 2 from Homo sapiens (Human).